The sequence spans 77 residues: Large ribosomal subunit protein bL28 (77 aa).

Residues 1 to 20 (MSRVCQVTGKGPVTGNNISH) form a disordered region.

It belongs to the bacterial ribosomal protein bL28 family.

This is Large ribosomal subunit protein bL28 from Pseudomonas fluorescens (strain SBW25).